A 66-amino-acid chain; its full sequence is Alpha-conotoxin-like Tx2 (66 aa).

An N-terminal signal peptide occupies residues 1–21 (MGMRMMFTVFLLVVLATTVVS). The propeptide occupies 22–49 (FTSGRRTFHGRNAAAKASGLVSLTDRRP). 2 disulfides stabilise this stretch: Cys-51/Cys-57 and Cys-52/Cys-65. Positions 53-55 (SHP) are ser-Xaa-Pro motif, crucial for potent interaction with nAChR.

This sequence belongs to the conotoxin A superfamily. As to expression, expressed by the venom duct.

The protein localises to the secreted. Its function is as follows. Alpha-conotoxins act on postsynaptic membranes, they bind to the nicotinic acetylcholine receptors (nAChR) and thus inhibit them. The protein is Alpha-conotoxin-like Tx2 of Conus textile (Cloth-of-gold cone).